A 940-amino-acid chain; its full sequence is MKRQSVSEIREIFLNYFKDKAHAVVPSSSLLPAGDPTLLFTTAGMVQFKPLFTGAVELPYTRATSCQKCLRTTDLEVVGKTERHCTFFEMLGNFSFGDYFKEEAIDYALDCSVNHLGFDKEKIWVTVYTDDDEAEKIWITKGIPKERITRLGKKDNFWGPAGDSGACGPCSELYLDRGVEKGGPDCATSGTCRPGCDCDRFLEFWNIVFNQFNQDTEGNLHPLKQTGIDTGSGLERVALLLQGADSVYDTNELRKIISFYEELSGIKYDDVITLSKMPTQKNNTARIAANQKAAFRVVTDHIRSVLFSIGDGIYPDRTGRGYVIRRLIRRATLFGRKLNFKEPFLYKLVDKVVEIYKPRYPELGKNSAAIQKTILAEEELFLKTLELGLEKIETLVAKTKTSGKTIFSGADAFLLYGTYGFPAEMTEEIVAEQGLDFDKKGFQEELEKDRQLSRESWKANKVSLMTGQSVEKTEFLGYSSLSGKGNIIHLFNENKPAGALKEGQAGAIVLNKTPFYPEGGGQVGDTGFLRQGKNVFKVLDTQKENDVILHFGEVLSGEFSIAQELEAEVEAARRERLRFHHSGTHLLNGALRNLLGDHVLQKGSVVSPEYLRFDFSHPSALTSKEIRKIESWVNESIRKNYPVVTKELPIEDAKKIGAVATFGEKYGDRVRVVQMGDASVEFCGGTHVSHTGEIGYFFIKKESSPGAGNRRIEGVCGPAVIETFQNRFAELTESVQNLNLKIKSELDNEGSKILVNSNVPGPDEIREKLEKEGATAVTFFRDLSEEIASQIEESTSAFLKMKKSLESRDFENNASVIEKVFASSMDTGVGKIVSAIFDDKDPNSLKGLSDNLKVREKNLLVILGSKNADNASVVITCSSQLVSKGIHCGDLVRTVCEMLGGKGGGKPDMAQGGGKEKQNLESAISFAIQLAKQTLTGEKV.

4 residues coordinate Zn(2+): His-581, His-585, Cys-683, and His-687.

The protein belongs to the class-II aminoacyl-tRNA synthetase family. Zn(2+) is required as a cofactor.

It localises to the cytoplasm. The catalysed reaction is tRNA(Ala) + L-alanine + ATP = L-alanyl-tRNA(Ala) + AMP + diphosphate. Catalyzes the attachment of alanine to tRNA(Ala) in a two-step reaction: alanine is first activated by ATP to form Ala-AMP and then transferred to the acceptor end of tRNA(Ala). Also edits incorrectly charged Ser-tRNA(Ala) and Gly-tRNA(Ala) via its editing domain. The sequence is that of Alanine--tRNA ligase from Leptospira borgpetersenii serovar Hardjo-bovis (strain JB197).